A 90-amino-acid chain; its full sequence is Probable Fe(2+)-trafficking protein (90 aa).

Belongs to the Fe(2+)-trafficking protein family.

Its function is as follows. Could be a mediator in iron transactions between iron acquisition and iron-requiring processes, such as synthesis and/or repair of Fe-S clusters in biosynthetic enzymes. The polypeptide is Probable Fe(2+)-trafficking protein (Idiomarina loihiensis (strain ATCC BAA-735 / DSM 15497 / L2-TR)).